The primary structure comprises 74 residues: Translation initiation factor IF-1 (74 aa).

One can recognise an S1-like domain in the interval 1–73; that stretch reads MSNKEDIIKM…TKGRIVYRKK (73 aa).

It belongs to the IF-1 family. As to quaternary structure, component of the 30S ribosomal translation pre-initiation complex which assembles on the 30S ribosome in the order IF-2 and IF-3, IF-1 and N-formylmethionyl-tRNA(fMet); mRNA recruitment can occur at any time during PIC assembly.

It is found in the cytoplasm. Its function is as follows. One of the essential components for the initiation of protein synthesis. Stabilizes the binding of IF-2 and IF-3 on the 30S subunit to which N-formylmethionyl-tRNA(fMet) subsequently binds. Helps modulate mRNA selection, yielding the 30S pre-initiation complex (PIC). Upon addition of the 50S ribosomal subunit IF-1, IF-2 and IF-3 are released leaving the mature 70S translation initiation complex. The sequence is that of Translation initiation factor IF-1 from Thermosipho melanesiensis (strain DSM 12029 / CIP 104789 / BI429).